The sequence spans 138 residues: Aspartate 1-decarboxylase (138 aa).

Serine 25 functions as the Schiff-base intermediate with substrate; via pyruvic acid in the catalytic mechanism. Pyruvic acid (Ser) is present on serine 25. A substrate-binding site is contributed by threonine 57. Tyrosine 58 functions as the Proton donor in the catalytic mechanism. Glycine 73 to alanine 75 contacts substrate.

This sequence belongs to the PanD family. Heterooctamer of four alpha and four beta subunits. Requires pyruvate as cofactor. Is synthesized initially as an inactive proenzyme, which is activated by self-cleavage at a specific serine bond to produce a beta-subunit with a hydroxyl group at its C-terminus and an alpha-subunit with a pyruvoyl group at its N-terminus.

Its subcellular location is the cytoplasm. It catalyses the reaction L-aspartate + H(+) = beta-alanine + CO2. It functions in the pathway cofactor biosynthesis; (R)-pantothenate biosynthesis; beta-alanine from L-aspartate: step 1/1. Catalyzes the pyruvoyl-dependent decarboxylation of aspartate to produce beta-alanine. The protein is Aspartate 1-decarboxylase of Renibacterium salmoninarum (strain ATCC 33209 / DSM 20767 / JCM 11484 / NBRC 15589 / NCIMB 2235).